The chain runs to 1538 residues: Arf-GAP with Rho-GAP domain, ANK repeat and PH domain-containing protein 3 (1538 aa).

Residues 4 to 68 (PQDLDIAVWL…LRLLRAGSAE (65 aa)) enclose the SAM domain. Disordered regions lie at residues 72–97 (DSHLDNTMEPTPSPAPDAQPPKPVPK), 125–149 (SRNSECTQRSSPLLPSSSEQPSVPN), and 215–242 (ASDRRDGRGVCQERAEHRQDLETREDAG). Over residues 82–97 (TPSPAPDAQPPKPVPK) the composition is skewed to pro residues. Residues 216-241 (SDRRDGRGVCQERAEHRQDLETREDA) are compositionally biased toward basic and acidic residues. PH domains are found at residues 282–374 (VPLL…SCLK) and 389–478 (RPLR…EAVT). In terms of domain architecture, Arf-GAP spans 479–606 (ETLSDYEVAE…LFRKPHPRHP (128 aa)). PH domains lie at 671–785 (ATYR…FSPL) and 795–901 (LLRM…AGGG). The region spanning 903–1084 (TGLQEQQMSR…ELIDGYISVF (182 aa)) is the Rho-GAP domain. The Ras-associating domain maps to 1113–1206 (GDLIMEVYIE…ASLLLRKVSM (94 aa)). Residues 1219 to 1321 (ESPRVGLLRC…WTTSILKAQH (103 aa)) form the PH 5 domain. Thr1344 bears the Phosphothreonine mark. Tyr1399 and Tyr1404 each carry phosphotyrosine. Over residues 1425–1439 (WSAKSDPSLTSQRSF) the composition is skewed to polar residues. Residues 1425–1538 (WSAKSDPSLT…SNPPSSQPLT (114 aa)) form a disordered region. 2 positions are modified to phosphoserine: Ser1438 and Ser1474. 2 stretches are compositionally biased toward low complexity: residues 1476 to 1486 (EEQLLQELNNL) and 1494 to 1505 (ASCPESSSQPTS). Over residues 1506 to 1529 (PQAPSPTSLPTPTPSLPTQPPCTS) the composition is skewed to pro residues.

Interacts (via SAM domain) with INPPL1/SHIP2. In terms of processing, tyrosine phosphorylated at a low basal level. PDGF treatment stimulates phosphorylation. Tyrosine phosphorylation is increased in cells that are in the process of becoming attached to a substrate and that start spreading and flattening.

The protein resides in the cytoplasm. It is found in the cell membrane. The protein localises to the cytoskeleton. Its subcellular location is the cell projection. It localises to the lamellipodium. The protein resides in the ruffle. Its function is as follows. Phosphatidylinositol 3,4,5-trisphosphate-dependent GTPase-activating protein that modulates actin cytoskeleton remodeling by regulating ARF and RHO family members. Is activated by phosphatidylinositol 3,4,5-trisphosphate (PtdIns(3,4,5)P3) binding. Can be activated by phosphatidylinositol 3,4-bisphosphate (PtdIns(3,4,5)P2) binding, albeit with lower efficiency. Acts preferentially on ARF5 and on RHOA. The polypeptide is Arf-GAP with Rho-GAP domain, ANK repeat and PH domain-containing protein 3 (Arap3) (Mus musculus (Mouse)).